A 212-amino-acid polypeptide reads, in one-letter code: Ribonuclease HII (212 aa).

Residues 20-209 (TCVVGVDEVG…VHNILYQEAS (190 aa)) enclose the RNase H type-2 domain. A divalent metal cation is bound by residues Asp26, Glu27, and Asp117.

It belongs to the RNase HII family. Mn(2+) is required as a cofactor. Requires Mg(2+) as cofactor.

It is found in the cytoplasm. It catalyses the reaction Endonucleolytic cleavage to 5'-phosphomonoester.. Its function is as follows. Endonuclease that specifically degrades the RNA of RNA-DNA hybrids. This is Ribonuclease HII from Cereibacter sphaeroides (strain ATCC 17029 / ATH 2.4.9) (Rhodobacter sphaeroides).